The primary structure comprises 235 residues: Small ribosomal subunit protein uS3 (235 aa).

Residues 39 to 107 (IRDFIKKECH…ELHLNIVEVR (69 aa)) form the KH type-2 domain. The interval 213–235 (AARDRKAQELQDGPAPRGAGGRR) is disordered.

The protein belongs to the universal ribosomal protein uS3 family. As to quaternary structure, part of the 30S ribosomal subunit. Forms a tight complex with proteins S10 and S14.

Binds the lower part of the 30S subunit head. Binds mRNA in the 70S ribosome, positioning it for translation. This Roseobacter denitrificans (strain ATCC 33942 / OCh 114) (Erythrobacter sp. (strain OCh 114)) protein is Small ribosomal subunit protein uS3.